A 270-amino-acid polypeptide reads, in one-letter code: Glutamate 5-kinase (270 aa).

Lys15 serves as a coordination point for ATP. Substrate is bound by residues Ser55, Asp142, and Asn158. Residues 178–179 (SD) and 220–226 (TGGMLSK) contribute to the ATP site.

It belongs to the glutamate 5-kinase family.

The protein localises to the cytoplasm. The enzyme catalyses L-glutamate + ATP = L-glutamyl 5-phosphate + ADP. Its pathway is amino-acid biosynthesis; L-proline biosynthesis; L-glutamate 5-semialdehyde from L-glutamate: step 1/2. Catalyzes the transfer of a phosphate group to glutamate to form L-glutamate 5-phosphate. The chain is Glutamate 5-kinase from Streptococcus uberis (strain ATCC BAA-854 / 0140J).